A 197-amino-acid chain; its full sequence is Protein tyrosine phosphatase receptor type C-associated protein (197 aa).

The helical transmembrane segment at V33–A53 threads the bilayer. Residues S99 and S103 each carry the phosphoserine modification. Disordered stretches follow at residues G120–A164 and S177–L197. Residues A124–D145 are compositionally biased toward basic and acidic residues.

In terms of assembly, interacts with CD45/PTPRC. Post-translationally, phosphorylated on tyrosine residues. Leukocyte-specific. Expressed in B- and T-cell lines, in spleen, thymus, and bone marrow of adult mice, and in embryos.

It localises to the membrane. This chain is Protein tyrosine phosphatase receptor type C-associated protein (Ptprcap), found in Mus musculus (Mouse).